Here is a 208-residue protein sequence, read N- to C-terminus: dTTP/UTP pyrophosphatase (208 aa).

Asp-79 functions as the Proton acceptor in the catalytic mechanism.

This sequence belongs to the Maf family. YhdE subfamily. Requires a divalent metal cation as cofactor.

It localises to the cytoplasm. The enzyme catalyses dTTP + H2O = dTMP + diphosphate + H(+). It catalyses the reaction UTP + H2O = UMP + diphosphate + H(+). Its function is as follows. Nucleoside triphosphate pyrophosphatase that hydrolyzes dTTP and UTP. May have a dual role in cell division arrest and in preventing the incorporation of modified nucleotides into cellular nucleic acids. The polypeptide is dTTP/UTP pyrophosphatase (Mesorhizobium japonicum (strain LMG 29417 / CECT 9101 / MAFF 303099) (Mesorhizobium loti (strain MAFF 303099))).